A 165-amino-acid polypeptide reads, in one-letter code: Acireductone dioxygenase (165 aa).

Fe(2+)-binding residues include His90, His92, Glu96, and His134. Ni(2+)-binding residues include His90, His92, Glu96, and His134.

Belongs to the acireductone dioxygenase (ARD) family. As to quaternary structure, monomer. The cofactor is Fe(2+). Ni(2+) is required as a cofactor.

The catalysed reaction is 1,2-dihydroxy-5-(methylsulfanyl)pent-1-en-3-one + O2 = 3-(methylsulfanyl)propanoate + CO + formate + 2 H(+). It carries out the reaction 1,2-dihydroxy-5-(methylsulfanyl)pent-1-en-3-one + O2 = 4-methylsulfanyl-2-oxobutanoate + formate + 2 H(+). Its pathway is amino-acid biosynthesis; L-methionine biosynthesis via salvage pathway; L-methionine from S-methyl-5-thio-alpha-D-ribose 1-phosphate: step 5/6. Catalyzes 2 different reactions between oxygen and the acireductone 1,2-dihydroxy-3-keto-5-methylthiopentene (DHK-MTPene) depending upon the metal bound in the active site. Fe-containing acireductone dioxygenase (Fe-ARD) produces formate and 2-keto-4-methylthiobutyrate (KMTB), the alpha-ketoacid precursor of methionine in the methionine recycle pathway. Ni-containing acireductone dioxygenase (Ni-ARD) produces methylthiopropionate, carbon monoxide and formate, and does not lie on the methionine recycle pathway. The sequence is that of Acireductone dioxygenase from Rhodopseudomonas palustris (strain ATCC BAA-98 / CGA009).